A 70-amino-acid chain; its full sequence is Putative defensin-like protein 280 (70 aa).

Residues 1–23 (MASIKHFFLVFICVSVLLTSGLA) form the signal peptide. 3 cysteine pairs are disulfide-bonded: cysteine 30/cysteine 53, cysteine 39/cysteine 65, and cysteine 43/cysteine 67.

Belongs to the DEFL family.

It localises to the secreted. This is Putative defensin-like protein 280 from Arabidopsis thaliana (Mouse-ear cress).